The sequence spans 155 residues: RNA pyrophosphohydrolase (155 aa).

The Nudix hydrolase domain maps to 6–148 (GYRANVAIVL…KQEVYRKALT (143 aa)). The Nudix box motif lies at 38–59 (GGVDTGETPLQAMYRELHEEIG).

The protein belongs to the Nudix hydrolase family. RppH subfamily. The cofactor is a divalent metal cation.

Functionally, accelerates the degradation of transcripts by removing pyrophosphate from the 5'-end of triphosphorylated RNA, leading to a more labile monophosphorylated state that can stimulate subsequent ribonuclease cleavage. This Francisella tularensis subsp. mediasiatica (strain FSC147) protein is RNA pyrophosphohydrolase.